Consider the following 328-residue polypeptide: Thiamine-monophosphate kinase (328 aa).

4 residues coordinate Mg(2+): Asp30, Thr45, Thr46, and Asp47. His54 lines the substrate pocket. Mg(2+)-binding residues include Asp75 and Asp122. ATP contacts are provided by residues 121-122 and Arg146; that span reads GD. Mg(2+) is bound at residue Asp211. Ser213 lines the ATP pocket. A Mg(2+)-binding site is contributed by Asp214. 2 residues coordinate substrate: Glu262 and Phe321.

This sequence belongs to the thiamine-monophosphate kinase family.

It catalyses the reaction thiamine phosphate + ATP = thiamine diphosphate + ADP. The protein operates within cofactor biosynthesis; thiamine diphosphate biosynthesis; thiamine diphosphate from thiamine phosphate: step 1/1. In terms of biological role, catalyzes the ATP-dependent phosphorylation of thiamine-monophosphate (TMP) to form thiamine-pyrophosphate (TPP), the active form of vitamin B1. The protein is Thiamine-monophosphate kinase of Haemophilus influenzae (strain ATCC 51907 / DSM 11121 / KW20 / Rd).